A 451-amino-acid polypeptide reads, in one-letter code: MENIDDLWNKVLEEMKKKVSKPSYETWLRATKANALQNNDTIIVTAPNEFARDWLEDHYSGLTSDIIEQLTGARLTPKFVIPQHNQEEEALPEQTPQTPPEKDVAGQSTLSQTMLNDKYTFNTFVIGSGNRFAHAASLAVAEAPARAYNPLFIYGGVGLGKTHLMHAIGHYVMEHNPNAKVVYLSSEKFTNEFINAIRDNKAVHFRNKYRNVDVLLIDDIQFIAGKIQTQEEFFHTFNALHEESKQIVISSDRPPKEIPTLEDRLRSRFEWGLITDITPPDLETRIAILRKKAKAENLDIPNEVMLYIANQIDTNIRELEGALIRVVAYSSLINQDMNADLAAEALKDIIPNAMPKTLTITDIQKLVGEHFQVKLEDFKAKKRTKSVAFPRQIAMYLSREMTDASLPKIGSEFGGRDHTTVIHAHEKISKLLATDQELQQKVQAITEQLRQ.

A domain I, interacts with DnaA modulators region spans residues 1–93; that stretch reads MENIDDLWNK…HNQEEEALPE (93 aa). Positions 88–108 are disordered; that stretch reads EEALPEQTPQTPPEKDVAGQS. The domain II stretch occupies residues 94-113; it reads QTPQTPPEKDVAGQSTLSQT. Residues 114–330 form a domain III, AAA+ region region; the sequence is MLNDKYTFNT…GALIRVVAYS (217 aa). Residues Gly158, Gly160, Lys161, and Thr162 each coordinate ATP. The domain IV, binds dsDNA stretch occupies residues 331 to 451; the sequence is SLINQDMNAD…VQAITEQLRQ (121 aa).

The protein belongs to the DnaA family. Oligomerizes as a right-handed, spiral filament on DNA at oriC.

The protein localises to the cytoplasm. Plays an essential role in the initiation and regulation of chromosomal replication. ATP-DnaA binds to the origin of replication (oriC) to initiate formation of the DNA replication initiation complex once per cell cycle. Binds the DnaA box (a 9 base pair repeat at the origin) and separates the double-stranded (ds)DNA. Forms a right-handed helical filament on oriC DNA; dsDNA binds to the exterior of the filament while single-stranded (ss)DNA is stabiized in the filament's interior. The ATP-DnaA-oriC complex binds and stabilizes one strand of the AT-rich DNA unwinding element (DUE), permitting loading of DNA polymerase. After initiation quickly degrades to an ADP-DnaA complex that is not apt for DNA replication. Binds acidic phospholipids. This chain is Chromosomal replication initiator protein DnaA, found in Shouchella clausii (strain KSM-K16) (Alkalihalobacillus clausii).